A 257-amino-acid chain; its full sequence is Protein vip1 (257 aa).

In terms of domain architecture, RRM spans 3–76 (NQVIVTNISP…NKIQITSEDG (74 aa)). The segment at 74 to 99 (EDGGAASTTDQGGAGGDQAARQEDKP) is disordered. Over residues 75 to 84 (DGGAASTTDQ) the composition is skewed to low complexity. Phosphoserine is present on residues Ser-132 and Ser-177. The disordered stretch occupies residues 217 to 257 (ARRLADAKNQAEGTASPASSTPTAPAEKEPTAPTTESKTTE). Phosphothreonine is present on Thr-230. Positions 230 to 257 (TASPASSTPTAPAEKEPTAPTTESKTTE) are enriched in low complexity. Phosphoserine occurs at positions 232 and 235.

This Schizosaccharomyces pombe (strain 972 / ATCC 24843) (Fission yeast) protein is Protein vip1 (vip1).